Consider the following 87-residue polypeptide: U3-theraphotoxin-Hhn1a 6 (87 aa).

Positions 1-24 are cleaved as a signal peptide; sequence MVNMKASMFLTFAGLVLLFVVCYA. A propeptide spanning residues 25 to 52 is cleaved from the precursor; that stretch reads SESEKKEFPKEMLSSIFAVDNDFKQEER. Cystine bridges form between cysteine 54–cysteine 67, cysteine 61–cysteine 72, and cysteine 66–cysteine 79.

Belongs to the neurotoxin 10 (Hwtx-1) family. 51 (Hntx-8) subfamily. Hntx-8 sub-subfamily. As to expression, expressed by the venom gland.

The protein resides in the secreted. Its function is as follows. Ion channel inhibitor. This chain is U3-theraphotoxin-Hhn1a 6, found in Cyriopagopus hainanus (Chinese bird spider).